A 255-amino-acid chain; its full sequence is Thiazole synthase (255 aa).

The Schiff-base intermediate with DXP role is filled by K95. 1-deoxy-D-xylulose 5-phosphate is bound by residues G156, 182–183 (AG), and 204–205 (NT).

It belongs to the ThiG family. In terms of assembly, homotetramer. Forms heterodimers with either ThiH or ThiS.

The protein resides in the cytoplasm. It carries out the reaction [ThiS sulfur-carrier protein]-C-terminal-Gly-aminoethanethioate + 2-iminoacetate + 1-deoxy-D-xylulose 5-phosphate = [ThiS sulfur-carrier protein]-C-terminal Gly-Gly + 2-[(2R,5Z)-2-carboxy-4-methylthiazol-5(2H)-ylidene]ethyl phosphate + 2 H2O + H(+). Its pathway is cofactor biosynthesis; thiamine diphosphate biosynthesis. Catalyzes the rearrangement of 1-deoxy-D-xylulose 5-phosphate (DXP) to produce the thiazole phosphate moiety of thiamine. Sulfur is provided by the thiocarboxylate moiety of the carrier protein ThiS. In vitro, sulfur can be provided by H(2)S. The sequence is that of Thiazole synthase from Photorhabdus laumondii subsp. laumondii (strain DSM 15139 / CIP 105565 / TT01) (Photorhabdus luminescens subsp. laumondii).